Reading from the N-terminus, the 77-residue chain is uncharacterized protein (77 aa).

This is an uncharacterized protein from Bacillus subtilis (strain 168).